The following is a 370-amino-acid chain: GDSL esterase/lipase At1g09390 (370 aa).

Positions 1 to 27 are cleaved as a signal peptide; that stretch reads MATLSLHSHSFLLVLLPFILILRQNLA. Ser44 functions as the Nucleophile in the catalytic mechanism. 2 N-linked (GlcNAc...) asparagine glycosylation sites follow: Asn90 and Asn315. Residues Asp336 and His339 contribute to the active site.

This sequence belongs to the 'GDSL' lipolytic enzyme family.

The protein localises to the secreted. This chain is GDSL esterase/lipase At1g09390, found in Arabidopsis thaliana (Mouse-ear cress).